The chain runs to 205 residues: Methylthioribulose-1-phosphate dehydratase (205 aa).

Residues histidine 98 and histidine 100 each coordinate Zn(2+).

The protein belongs to the aldolase class II family. MtnB subfamily. Zn(2+) is required as a cofactor.

It catalyses the reaction 5-(methylsulfanyl)-D-ribulose 1-phosphate = 5-methylsulfanyl-2,3-dioxopentyl phosphate + H2O. Its pathway is amino-acid biosynthesis; L-methionine biosynthesis via salvage pathway; L-methionine from S-methyl-5-thio-alpha-D-ribose 1-phosphate: step 2/6. Its function is as follows. Catalyzes the dehydration of methylthioribulose-1-phosphate (MTRu-1-P) into 2,3-diketo-5-methylthiopentyl-1-phosphate (DK-MTP-1-P). The polypeptide is Methylthioribulose-1-phosphate dehydratase (Gluconacetobacter diazotrophicus (strain ATCC 49037 / DSM 5601 / CCUG 37298 / CIP 103539 / LMG 7603 / PAl5)).